Consider the following 180-residue polypeptide: CD-NTase/cGAS isopeptidase (180 aa).

One can recognise an MPN domain in the interval 33 to 165; that stretch reads IVISSSTIEQ…AGSYSLSASV (133 aa). The active-site Proton donor/acceptor is glutamate 54. Histidine 115, histidine 117, and aspartate 128 together coordinate Zn(2+).

Belongs to the peptidase M67B family. Cap3 isopeptidase subfamily.

In terms of biological role, metalloprotease priming reversal component of a CBASS antivirus system. CBASS (cyclic oligonucleotide-based antiphage signaling system) provides immunity against bacteriophages. The CD-NTase protein (CdnD) synthesizes cyclic nucleotides in response to infection; these serve as specific second messenger signals. The signals activate a diverse range of effectors, leading to bacterial cell death and thus abortive phage infection. A type II-C(AAG) CBASS system. Reverses the primed state of DncV, the CD-NTase. Cleaves a CdnD-GFP (green fluorescent protein) fusion protein precisely at the C-terminus of CdnD. Overexpression decreases the efficacy of CBASS protection against phage T2. Antagonism of phage defense upon overexpression is CBASS-system specific, Cap3 from this bacteria only antagonizes its cognate CBASS system and not that of C.freundii, E.coli or V.cholerae. Functionally, protects E.coli against phage T2 infection. When the cdnD-cap2-cap3-cap4 operon is introduced in E.coli there is a more than 10(3) decrease in the efficiency of T2 plaque formation. The operon does not protect against phage T5 and only about 10-fold against T7. This is CD-NTase/cGAS isopeptidase from Enterobacter hormaechei subsp. hoffmannii (strain UCI 50).